Here is a 257-residue protein sequence, read N- to C-terminus: Imidazole glycerol phosphate synthase subunit HisF (257 aa).

Active-site residues include Asp11 and Asp130.

Belongs to the HisA/HisF family. In terms of assembly, heterodimer of HisH and HisF.

The protein resides in the cytoplasm. It catalyses the reaction 5-[(5-phospho-1-deoxy-D-ribulos-1-ylimino)methylamino]-1-(5-phospho-beta-D-ribosyl)imidazole-4-carboxamide + L-glutamine = D-erythro-1-(imidazol-4-yl)glycerol 3-phosphate + 5-amino-1-(5-phospho-beta-D-ribosyl)imidazole-4-carboxamide + L-glutamate + H(+). It functions in the pathway amino-acid biosynthesis; L-histidine biosynthesis; L-histidine from 5-phospho-alpha-D-ribose 1-diphosphate: step 5/9. IGPS catalyzes the conversion of PRFAR and glutamine to IGP, AICAR and glutamate. The HisF subunit catalyzes the cyclization activity that produces IGP and AICAR from PRFAR using the ammonia provided by the HisH subunit. The polypeptide is Imidazole glycerol phosphate synthase subunit HisF (Actinobacillus pleuropneumoniae serotype 7 (strain AP76)).